Here is a 77-residue protein sequence, read N- to C-terminus: ATP synthase subunit 9, mitochondrial (77 aa).

2 consecutive transmembrane segments (helical) span residues 8–28 and 45–72; these read MGAG…GNVL and LFGY…LISF.

It belongs to the ATPase C chain family. As to quaternary structure, F-type ATPases have 2 components, CF(1) - the catalytic core - and CF(0) - the membrane proton channel. CF(1) has five subunits: alpha(3), beta(3), gamma(1), delta(1), epsilon(1). CF(0) has three main subunits: a, b and c.

Its subcellular location is the mitochondrion membrane. This protein is one of the chains of the nonenzymatic membrane component (F0) of mitochondrial ATPase. The sequence is that of ATP synthase subunit 9, mitochondrial (ATP9) from Petunia sp. (Petunia).